The sequence spans 966 residues: Phosphoenolpyruvate carboxylase, housekeeping isozyme (966 aa).

Ser-11 carries the phosphoserine modification. Catalysis depends on residues His-172 and Lys-601.

It belongs to the PEPCase type 1 family. In terms of assembly, homotetramer. Mg(2+) is required as a cofactor.

The protein resides in the cytoplasm. The catalysed reaction is oxaloacetate + phosphate = phosphoenolpyruvate + hydrogencarbonate. With respect to regulation, by light-reversible phosphorylation. Functionally, through the carboxylation of phosphoenolpyruvate (PEP) it forms oxaloacetate, a four-carbon dicarboxylic acid source for the tricarboxylic acid cycle. This Saccharum hybrid (Sugarcane) protein is Phosphoenolpyruvate carboxylase, housekeeping isozyme.